The chain runs to 689 residues: Sodium-dependent phosphate transport protein 2B (689 aa).

Residues 1–41 are disordered; that stretch reads MAPWPELGDAQPNPDKYLEGAAGQQPTAPDKSKETNKNNTE. Residues 1–100 lie on the Cytoplasmic side of the membrane; sequence MAPWPELGDA…LCVFQGIGRL (100 aa). The helical transmembrane segment at 101–121 threads the bilayer; it reads ILLLGFLYFFVCSLDILSSAF. Over 122-135 the chain is Extracellular; it reads QLVGGKMAGQFFSN. Residues 136 to 156 traverse the membrane as a helical segment; that stretch reads SSIMSNPLLGLVIGVLVTVLV. The Cytoplasmic portion of the chain corresponds to 157-212; that stretch reads QSSSTSTSIVVSMVSSSLLTVRAAIPIIMGANIGTSITNTIVALMQVGDRSEFRRA. A helical membrane pass occupies residues 213-233; sequence FAGATVHDFFNWLSVLVLLPV. Residues 234–362 are Extracellular-facing; sequence EVATHYLEII…FVNFHLPDLA (129 aa). N294, N307, and N320 each carry an N-linked (GlcNAc...) asparagine glycan. C302 and C349 form a disulfide bridge. A helical transmembrane segment spans residues 363–383; it reads VGTILLILSLLVLCGCLIMIV. Topologically, residues 384-407 are cytoplasmic; that stretch reads KILGSVLKGQVATVIKKTINTDFP. The helical transmembrane segment at 408–428 threads the bilayer; it reads FPFAWLTGYLAILVGAGMTFI. Residues 429–485 are Extracellular-facing; the sequence is VQSSSVFTSALTPLIGIGVITIERAYPLTLGSNIGTTTTAILAALASPGNALRSSLQ. A helical transmembrane segment spans residues 486-506; it reads IALCHFFFNISGILLWYPIPF. Residues 507 to 525 lie on the Cytoplasmic side of the membrane; sequence TRLPIRMAKGLGNISAKYR. The chain crosses the membrane as a helical span at residues 526-546; sequence WFAVFYLIIFFFLIPLTVFGL. Topologically, residues 547–552 are extracellular; it reads SLAGWR. The helical transmembrane segment at 553-573 threads the bilayer; sequence VLVGVGVPVVFIIILVLCLRL. Topologically, residues 574 to 687 are cytoplasmic; sequence LQSRCPRVLP…PASDSKTECT (114 aa).

Belongs to the SLC34A transporter family.

Its subcellular location is the apical cell membrane. The enzyme catalyses 3 Na(+)(out) + phosphate(out) = 3 Na(+)(in) + phosphate(in). Functionally, involved in actively transporting phosphate into cells via Na(+) cotransport. The protein is Sodium-dependent phosphate transport protein 2B (SLC34A2) of Pongo abelii (Sumatran orangutan).